Consider the following 170-residue polypeptide: Fluoride-specific ion channel FluC 2 (170 aa).

4 consecutive transmembrane segments (helical) span residues 8–28 (ALVF…TVWI), 55–75 (IALL…VGMI), 84–104 (TFWG…AAAV), and 114–134 (ILIG…AAAM). Na(+)-binding residues include Gly92 and Thr95.

This sequence belongs to the fluoride channel Fluc/FEX (TC 1.A.43) family.

It localises to the cell membrane. It catalyses the reaction fluoride(in) = fluoride(out). Its activity is regulated as follows. Na(+) is not transported, but it plays an essential structural role and its presence is essential for fluoride channel function. Fluoride-specific ion channel. Important for reducing fluoride concentration in the cell, thus reducing its toxicity. The sequence is that of Fluoride-specific ion channel FluC 2 from Corynebacterium jeikeium (strain K411).